Consider the following 483-residue polypeptide: Glutamyl-tRNA(Gln) amidotransferase subunit A (483 aa).

Residues lysine 77 and serine 152 each act as charge relay system in the active site. Serine 176 serves as the catalytic Acyl-ester intermediate.

Belongs to the amidase family. GatA subfamily. As to quaternary structure, heterotrimer of A, B and C subunits.

It catalyses the reaction L-glutamyl-tRNA(Gln) + L-glutamine + ATP + H2O = L-glutaminyl-tRNA(Gln) + L-glutamate + ADP + phosphate + H(+). In terms of biological role, allows the formation of correctly charged Gln-tRNA(Gln) through the transamidation of misacylated Glu-tRNA(Gln) in organisms which lack glutaminyl-tRNA synthetase. The reaction takes place in the presence of glutamine and ATP through an activated gamma-phospho-Glu-tRNA(Gln). This chain is Glutamyl-tRNA(Gln) amidotransferase subunit A, found in Listeria monocytogenes serotype 4b (strain F2365).